Consider the following 299-residue polypeptide: Tyrosine recombinase XerC (299 aa).

In terms of domain architecture, Core-binding (CB) spans 1 to 85 (MERQLDAYCE…AVRGLYHYLN (85 aa)). The region spanning 106–285 (RLPKTLDTDR…DFQHLAAVYD (180 aa)) is the Tyr recombinase domain. Active-site residues include arginine 146, lysine 170, histidine 237, arginine 240, and histidine 263. Catalysis depends on tyrosine 272, which acts as the O-(3'-phospho-DNA)-tyrosine intermediate.

It belongs to the 'phage' integrase family. XerC subfamily. In terms of assembly, forms a cyclic heterotetrameric complex composed of two molecules of XerC and two molecules of XerD.

The protein localises to the cytoplasm. Functionally, site-specific tyrosine recombinase, which acts by catalyzing the cutting and rejoining of the recombining DNA molecules. The XerC-XerD complex is essential to convert dimers of the bacterial chromosome into monomers to permit their segregation at cell division. It also contributes to the segregational stability of plasmids. The polypeptide is Tyrosine recombinase XerC (Pseudomonas fluorescens (strain Pf0-1)).